The following is a 189-amino-acid chain: MIAGVDEAGRGAWIGNVVAAAVILPNDYDLPDLTDSKKLSAAKRERLCAAIYEQAIAVACAWCSPEEIDQLNIHYATLCAMKKAVITLKVAPTEVLIDGKFAPELPFPTRTIIGGDALEPAISAASIVAKVTRDKQMIALDALYPDYGFAAHKGYGTQKHQQALRQFGVLPLHRRSYAPIAALLKNNKK.

Residues 1-189 enclose the RNase H type-2 domain; it reads MIAGVDEAGR…IAALLKNNKK (189 aa). Positions 6, 7, and 98 each coordinate a divalent metal cation.

The protein belongs to the RNase HII family. Mn(2+) is required as a cofactor. The cofactor is Mg(2+).

It localises to the cytoplasm. It carries out the reaction Endonucleolytic cleavage to 5'-phosphomonoester.. Functionally, endonuclease that specifically degrades the RNA of RNA-DNA hybrids. The chain is Ribonuclease HII from Dichelobacter nodosus (strain VCS1703A).